The chain runs to 416 residues: Putative competence-damage inducible protein (416 aa).

The protein belongs to the CinA family.

This Levilactobacillus brevis (strain ATCC 367 / BCRC 12310 / CIP 105137 / JCM 1170 / LMG 11437 / NCIMB 947 / NCTC 947) (Lactobacillus brevis) protein is Putative competence-damage inducible protein.